The primary structure comprises 318 residues: L-lactate dehydrogenase (318 aa).

NAD(+) contacts are provided by residues Val17, Asp38, Lys43, Tyr69, and Gly83 to Ala84. 2 residues coordinate substrate: Gln86 and Arg92. NAD(+) is bound by residues Ser105, Ala122–Asn124, and Ser147. Residue Asn124–Asp127 coordinates substrate. Position 152–155 (Asp152–Arg155) interacts with substrate. Residues Lys157 and His172 each contribute to the beta-D-fructose 1,6-bisphosphate site. The Proton acceptor role is filled by His179. Tyr223 carries the phosphotyrosine modification. Thr232 serves as a coordination point for substrate.

Belongs to the LDH/MDH superfamily. LDH family. In terms of assembly, homotetramer.

It is found in the cytoplasm. The catalysed reaction is (S)-lactate + NAD(+) = pyruvate + NADH + H(+). It functions in the pathway fermentation; pyruvate fermentation to lactate; (S)-lactate from pyruvate: step 1/1. Allosterically activated by fructose 1,6-bisphosphate (FBP). Functionally, catalyzes the conversion of lactate to pyruvate. This chain is L-lactate dehydrogenase, found in Staphylococcus saprophyticus subsp. saprophyticus (strain ATCC 15305 / DSM 20229 / NCIMB 8711 / NCTC 7292 / S-41).